The chain runs to 74 residues: Mitochondrial import receptor subunit TOM6 homolog (74 aa).

A compositionally biased stretch (low complexity) spans 1–14 (MASSGAGVTAAGSA). Residues 1–24 (MASSGAGVTAAGSANEAPEIPDNV) form a disordered region. Ala2 bears the N-acetylalanine mark.

It belongs to the Tom6 family. Forms part of the preprotein translocase complex of the outer mitochondrial membrane (TOM complex) which consists of at least 7 different proteins (TOMM5, TOMM6, TOMM7, TOMM20, TOMM22, TOMM40 and TOMM70).

Its subcellular location is the mitochondrion outer membrane. In Bos taurus (Bovine), this protein is Mitochondrial import receptor subunit TOM6 homolog (TOMM6).